The chain runs to 52 residues: Transcriptional regulator SlrA (52 aa).

Positions 1–38 (MKTHVKKDLDKGWHMLIQEARSIGLGIHDVRQFLESET) constitute a Sin domain.

As to quaternary structure, component of the SlrR/SlrA complex.

Required specifically for induction of eps and yqxM operons by antagonizing SinR. Regulates SlrR activity. Controls the initiation of biofilm formation. The polypeptide is Transcriptional regulator SlrA (slrA) (Bacillus subtilis (strain 168)).